Consider the following 428-residue polypeptide: Tryptophan synthase beta chain (428 aa).

An N6-(pyridoxal phosphate)lysine modification is found at lysine 100.

Belongs to the TrpB family. In terms of assembly, tetramer of two alpha and two beta chains. Pyridoxal 5'-phosphate serves as cofactor.

The catalysed reaction is (1S,2R)-1-C-(indol-3-yl)glycerol 3-phosphate + L-serine = D-glyceraldehyde 3-phosphate + L-tryptophan + H2O. Its pathway is amino-acid biosynthesis; L-tryptophan biosynthesis; L-tryptophan from chorismate: step 5/5. In terms of biological role, the beta subunit is responsible for the synthesis of L-tryptophan from indole and L-serine. This chain is Tryptophan synthase beta chain, found in Streptomyces griseus subsp. griseus (strain JCM 4626 / CBS 651.72 / NBRC 13350 / KCC S-0626 / ISP 5235).